Here is a 140-residue protein sequence, read N- to C-terminus: Large ribosomal subunit protein uL11 (140 aa).

It belongs to the universal ribosomal protein uL11 family. Part of the ribosomal stalk of the 50S ribosomal subunit. Interacts with L10 and the large rRNA to form the base of the stalk. L10 forms an elongated spine to which L12 dimers bind in a sequential fashion forming a multimeric L10(L12)X complex. In terms of processing, one or more lysine residues are methylated.

In terms of biological role, forms part of the ribosomal stalk which helps the ribosome interact with GTP-bound translation factors. This Desulforapulum autotrophicum (strain ATCC 43914 / DSM 3382 / VKM B-1955 / HRM2) (Desulfobacterium autotrophicum) protein is Large ribosomal subunit protein uL11.